A 1126-amino-acid polypeptide reads, in one-letter code: DNA-directed RNA polymerase subunit Rpo2 (1126 aa).

Cys-1060, Cys-1063, Cys-1078, and His-1081 together coordinate Zn(2+).

The protein belongs to the RNA polymerase beta chain family. As to quaternary structure, part of the 13-subunit RNA polymerase complex. Interacts with TFS4. In terms of assembly, (Microbial infection) Binds viral protein RIP which blocks global transcription. Zn(2+) is required as a cofactor.

It is found in the cytoplasm. It catalyses the reaction RNA(n) + a ribonucleoside 5'-triphosphate = RNA(n+1) + diphosphate. Its function is as follows. DNA-dependent RNA polymerase (RNAP) catalyzes the transcription of DNA into RNA using the four ribonucleoside triphosphates as substrates. This subunit is involved in DNA promoter recognition. The chain is DNA-directed RNA polymerase subunit Rpo2 from Sulfolobus acidocaldarius (strain ATCC 33909 / DSM 639 / JCM 8929 / NBRC 15157 / NCIMB 11770).